A 166-amino-acid chain; its full sequence is Ribonuclease P protein component (166 aa).

It belongs to the RnpA family. As to quaternary structure, consists of a catalytic RNA component (M1 or rnpB) and a protein subunit.

It carries out the reaction Endonucleolytic cleavage of RNA, removing 5'-extranucleotides from tRNA precursor.. Functionally, RNaseP catalyzes the removal of the 5'-leader sequence from pre-tRNA to produce the mature 5'-terminus. It can also cleave other RNA substrates such as 4.5S RNA. The protein component plays an auxiliary but essential role in vivo by binding to the 5'-leader sequence and broadening the substrate specificity of the ribozyme. In Helicobacter pylori (strain HPAG1), this protein is Ribonuclease P protein component.